The following is an 86-amino-acid chain: MGKIFDQEKRLEGTWKNSKWGNQGIIAPVDGDLKMIDLELEKKMTKLEHENKLMKNALYELSRMENNDYATWVIKVLFGGAPHGAK.

Residues 38 to 67 (LELEKKMTKLEHENKLMKNALYELSRMENN) are a coiled coil.

Belongs to the phi29likevirus DNA replication protein 1 family. Homomultimer. Self-associates into large complexes forming long filamentous structures. Interacts (via N-terminus) with the primer terminal protein. Interacts with host FtsZ protein.

It is found in the host membrane. In terms of biological role, protein that assembles into highly ordered structures and provides a specific site for viral DNA replication. Probably anchors the viral DNA replisome to the host membrane. This chain is DNA replication protein 1 (1), found in Bacillus subtilis (Bacteriophage phi-29).